A 66-amino-acid chain; its full sequence is MTIVGFFRFVLEGILTMYHFQKIRMTLTTQGFVLNKSLRKDYELWFVYGSCPESKVKLQTSSHKWL.

This is an uncharacterized protein from Chlamydia pneumoniae (Chlamydophila pneumoniae).